A 462-amino-acid polypeptide reads, in one-letter code: MLKIYNTLSRQKEEFKPIHAGKIGMYVCGITVYDLCHIGHGRTFAAFDVVARYLRYSGYQLKYVRNITDIDDKIIKRAQENGESIEQLTNRMIGEMHKDFAALNILPPDLEPRATRHITEIVELVEKLIAREHAYVASNGDVMFSVDSDPQYGSLSRQDLDQLQAGARVEVAADVKRNPMDFVLWKMSKADEPGWASPWGNGRPGWHIECSAMNCKQLGEHFDIHGGGSDLMFPHHENEIAQSTCAHDGPYVNYWMHSGMVMIDREKMSKSLNNFFTVRDVLEHYDAETVRYFLMSGHYRSQLNYGEDNLNQARSALERLYIALRNTDTGATPAGGEEFETRFREAMDDDFNTPEAYSALFDLAREVNRMKAEAPAAADGLAARLRVLGGVLGLLEQDPEQFLQSGANSNDEEVAQIEALIQMRIDARNEKNWAQADVARDRLNEMGIVLEDGAGGTRWRRK.

Cys-28 contacts Zn(2+). The 'HIGH' region motif lies at 30–40 (ITVYDLCHIGH). Positions 210, 235, and 239 each coordinate Zn(2+). Positions 267–271 (KMSKS) match the 'KMSKS' region motif. Lys-270 contacts ATP.

It belongs to the class-I aminoacyl-tRNA synthetase family. In terms of assembly, monomer. The cofactor is Zn(2+).

The protein resides in the cytoplasm. It carries out the reaction tRNA(Cys) + L-cysteine + ATP = L-cysteinyl-tRNA(Cys) + AMP + diphosphate. The polypeptide is Cysteine--tRNA ligase (Erwinia tasmaniensis (strain DSM 17950 / CFBP 7177 / CIP 109463 / NCPPB 4357 / Et1/99)).